Consider the following 430-residue polypeptide: CinA-like protein (430 aa).

The protein belongs to the CinA family.

This is CinA-like protein from Prochlorococcus marinus (strain NATL1A).